Here is an 81-residue protein sequence, read N- to C-terminus: Translational regulator CsrA (81 aa).

The segment covering 59-71 (SQMQHLEQGNFPT) has biased composition (polar residues). Residues 59 to 81 (SQMQHLEQGNFPTSFDDDDFFNR) are disordered.

The protein belongs to the CsrA/RsmA family. As to quaternary structure, homodimer; the beta-strands of each monomer intercalate to form a hydrophobic core, while the alpha-helices form wings that extend away from the core.

It is found in the cytoplasm. Functionally, a key translational regulator that binds mRNA to regulate translation initiation and/or mRNA stability. Mediates global changes in gene expression, shifting from rapid growth to stress survival by linking envelope stress, the stringent response and the catabolite repression systems. Usually binds in the 5'-UTR; binding at or near the Shine-Dalgarno sequence prevents ribosome-binding, repressing translation, binding elsewhere in the 5'-UTR can activate translation and/or stabilize the mRNA. Its function is antagonized by small RNA(s). The protein is Translational regulator CsrA of Psychrobacter sp. (strain PRwf-1).